A 90-amino-acid polypeptide reads, in one-letter code: Elongation factor 1-beta (90 aa).

The protein belongs to the EF-1-beta/EF-1-delta family.

Promotes the exchange of GDP for GTP in EF-1-alpha/GDP, thus allowing the regeneration of EF-1-alpha/GTP that could then be used to form the ternary complex EF-1-alpha/GTP/AAtRNA. The protein is Elongation factor 1-beta of Desulfurococcus amylolyticus (strain DSM 18924 / JCM 16383 / VKM B-2413 / 1221n) (Desulfurococcus kamchatkensis).